We begin with the raw amino-acid sequence, 68 residues long: Pleurocidin-like peptide WF4 (68 aa).

Positions 1-22 are cleaved as a signal peptide; sequence MKFTATFLMMFIFVLMVEPGEC. Residues 48–68 constitute a propeptide that is removed on maturation; that stretch reads GEQQDLDKRAVDEDPNVIVFE.

This sequence belongs to the pleurocidin family.

The protein resides in the secreted. Antimicrobial peptide. In Pseudopleuronectes americanus (Winter flounder), this protein is Pleurocidin-like peptide WF4 (ple4).